The sequence spans 639 residues: 3-hydroxybenzoate 4-monooxygenase (639 aa).

FAD-binding positions include 34–64, glutamine 73, valine 166, asparagine 212, 269–271, tyrosine 317, aspartate 349, and serine 365; these read DVLIVGCGPAGLTLAAQLAAFPDIRTCIVEQ and RFY.

This sequence belongs to the PheA/TfdB FAD monooxygenase family. As to quaternary structure, homodimer. The cofactor is FAD.

The enzyme catalyses 3-hydroxybenzoate + NADPH + O2 + H(+) = 3,4-dihydroxybenzoate + NADP(+) + H2O. Converts 3-hydroxybenzoate (m-hydroxybenzoate), and to a lesser extent p-hydroxybenzoate, to 3,4-dihydroxybenzoate (protocatechuate). Also acts on a number of analogs of 3-hydroxybenzoate substituted in the 2, 4, 5 and 6 positions. The polypeptide is 3-hydroxybenzoate 4-monooxygenase (mobA) (Comamonas testosteroni (Pseudomonas testosteroni)).